The chain runs to 1186 residues: Pumilio homolog 1 (1186 aa).

Serine 2 is subject to N-acetylserine. Phosphoserine is present on serine 19. The interval 22 to 73 is disordered; sequence LKHHPQEPANPNMPVVLTSGTGSQAQPQPAANQALAAGTHSSPVPGSIGVAG. Positions 45–58 are enriched in low complexity; it reads QAQPQPAANQALAA. 3 positions are modified to phosphoserine: serine 75, serine 98, and serine 106. The residue at position 112 (threonine 112) is a Phosphothreonine. 5 positions are modified to phosphoserine: serine 124, serine 159, serine 197, serine 209, and serine 229. The disordered stretch occupies residues 233–272; sequence SCLRKGGFGPRDADSDENDKGEKKNKGTFDGDKLGDLKEE. A compositionally biased stretch (basic and acidic residues) spans 250-272; it reads NDKGEKKNKGTFDGDKLGDLKEE. A Phosphoserine modification is found at serine 305. Residues 485-502 are compositionally biased toward low complexity; sequence TNSANQQTTPQAQQGQQQ. Disordered stretches follow at residues 485–524 and 613–648; these read TNSA…GQQT and AGTT…FYGN. Residues 511 to 524 are compositionally biased toward polar residues; sequence RPLTPNQNQQGQQT. Position 514 is a phosphothreonine (threonine 514). Residues 626–639 are compositionally biased toward low complexity; the sequence is QQPQPQPQQQPNNN. Serine 709 and serine 714 each carry phosphoserine. The interval 742–773 is disordered; sequence GPVGMPLPSQGPGHSQTPPPSLSSHGSSSSLN. The segment covering 763-773 has biased composition (low complexity); that stretch reads LSSHGSSSSLN. Arginine 796 carries the omega-N-methylarginine modification. Phosphoserine occurs at positions 806 and 822. Residues 828-1168 enclose the PUM-HD domain; that stretch reads GRSRLLEDFR…HILAKLEKYY (341 aa). Pumilio repeat units lie at residues 848-883, 884-919, 920-955, 956-991, 992-1027, 1028-1063, 1064-1099, and 1103-1142; these read EIAG…LVFN, EILQ…ALAE, RIRG…EMVR, ELDG…FIID, AFKG…PILE, ELHQ…KIVA, EIRG…VLID, and TMND…IVMH. The adenine-nucleotide binding in RNA target stretch occupies residues 863-867; sequence SRFIQ. The uracil-nucleotide binding in RNA target stretch occupies residues 899–903; it reads NYVIQ. Positions 935 to 939 are adenine-nucleotide binding in RNA target; it reads CRVIQ. Residues 971 to 975 are non-specific-nucleotide binding in RNA target; that stretch reads NHVVQ. The interval 1007–1011 is adenine-nucleotide binding in RNA target; that stretch reads CRVIQ. The interval 1043–1047 is uracil-nucleotide binding in RNA target; it reads NYVIQ. The segment at 1079-1083 is guanine-nucleotide binding in RNA target; it reads SNVVE. The interval 1122–1126 is uracil-nucleotide binding in RNA target; sequence NYVVQ.

Recruits the CCR4-POP2-NOT deadenylase leading to translational inhibition and mRNA degradation. In case of viral infection, interacts with DHX58. Interacts with TRIM71 (via NHL repeats) in an RNA-dependent manner. Post-translationally, phosphorylation at Ser-714 promotes RNA-binding activity. Following growth factor stimulation phosphorylated at Ser-714, promoting binding to the 3'-UTR of CDKN1B/p27 mRNA. In terms of tissue distribution, expressed in brain, heart, kidney, muscle, intestine and stomach. Not expressed in cerebellum, corpus callosum, caudate nucleus, hippocampus, medulla oblongata and putamen. Expressed in all fetal tissues tested.

Its subcellular location is the cytoplasm. The protein localises to the P-body. It is found in the cytoplasmic granule. Sequence-specific RNA-binding protein that acts as a post-transcriptional repressor by binding the 3'-UTR of mRNA targets. Binds to an RNA consensus sequence, the Pumilio Response Element (PRE), 5'-UGUANAUA-3', that is related to the Nanos Response Element (NRE). Mediates post-transcriptional repression of transcripts via different mechanisms: acts via direct recruitment of the CCR4-POP2-NOT deadenylase leading to translational inhibition and mRNA degradation. Also mediates deadenylation-independent repression by promoting accessibility of miRNAs. Following growth factor stimulation, phosphorylated and binds to the 3'-UTR of CDKN1B/p27 mRNA, inducing a local conformational change that exposes miRNA-binding sites, promoting association of miR-221 and miR-222, efficient suppression of CDKN1B/p27 expression, and rapid entry to the cell cycle. Acts as a post-transcriptional repressor of E2F3 mRNAs by binding to its 3'-UTR and facilitating miRNA regulation. Represses a program of genes necessary to maintain genomic stability such as key mitotic, DNA repair and DNA replication factors. Its ability to repress those target mRNAs is regulated by the lncRNA NORAD (non-coding RNA activated by DNA damage) which, due to its high abundance and multitude of PUMILIO binding sites, is able to sequester a significant fraction of PUM1 and PUM2 in the cytoplasm. Involved in neuronal functions by regulating ATXN1 mRNA levels: acts by binding to the 3'-UTR of ATXN1 transcripts, leading to their down-regulation independently of the miRNA machinery. Plays a role in cytoplasmic sensing of viral infection. In testis, acts as a post-transcriptional regulator of spermatogenesis by binding to the 3'-UTR of mRNAs coding for regulators of p53/TP53. Involved in embryonic stem cell renewal by facilitating the exit from the ground state: acts by targeting mRNAs coding for naive pluripotency transcription factors and accelerates their down-regulation at the onset of differentiation. Binds specifically to miRNA MIR199A precursor, with PUM2, regulates miRNA MIR199A expression at a postranscriptional level. The chain is Pumilio homolog 1 from Homo sapiens (Human).